Reading from the N-terminus, the 407-residue chain is Melanoma-associated antigen B6B (407 aa).

Positions 1 to 16 (MPRGQKSKLRARGKRR) are enriched in basic residues. The tract at residues 1 to 185 (MPRGQKSKLR…ESLSSSKRAA (185 aa)) is disordered. 2 stretches are compositionally biased toward polar residues: residues 56–68 (SGSS…QGAS) and 94–109 (PSTS…SQGA). Over residues 123–132 (KSDEAAKGQN) the composition is skewed to basic and acidic residues. Residues 133–155 (EKSPSTSRDASVPQESQGASPTG) are compositionally biased toward polar residues. In terms of domain architecture, MAGE spans 195-394 (IKRKANKMVQ…GLYPHLYEDA (200 aa)).

The polypeptide is Melanoma-associated antigen B6B (Homo sapiens (Human)).